The following is an 85-amino-acid chain: Beta-toxin Ct6 (85 aa).

The N-terminal stretch at 1–18 is a signal peptide; that stretch reads MKTFVLALCLVLIGMVYA. One can recognise an LCN-type CS-alpha/beta domain in the interval 19–84; that stretch reads KDGYLVSKHT…VYPLPNKSCG (66 aa). 4 disulfides stabilise this stretch: C30–C83, C34–C59, C43–C64, and C47–C66. C83 is subject to Cysteine amide.

The protein belongs to the long (4 C-C) scorpion toxin superfamily. Sodium channel inhibitor family. Beta subfamily. As to expression, expressed by the venom gland.

It localises to the secreted. Beta toxins bind voltage-independently at site-4 of sodium channels (Nav) and shift the voltage of activation toward more negative potentials thereby affecting sodium channel activation and promoting spontaneous and repetitive firing. The chain is Beta-toxin Ct6 from Centruroides tecomanus (Scorpion).